Consider the following 456-residue polypeptide: Vitamin K-dependent protein C (456 aa).

A signal peptide spans 1 to 20 (MWQLASLSLLLTICGTCSTA). A propeptide spanning residues 21–42 (APPGSVFSSSESAHQVLRIRKR) is cleaved from the precursor. Positions 47-88 (LEEIRAGSLERECMEEICDFEEAKEIFQNVDDTLAYWSKYVD) constitute a Gla domain. A 4-carboxyglutamate mark is found at Glu48, Glu49, Glu56, Glu58, Glu61, Glu62, Glu67, Glu68, and Glu71. Residues Cys59 and Cys64 are joined by a disulfide bond. Cystine bridges form between Cys92/Cys111, Cys101/Cys106, Cys105/Cys120, and Cys122/Cys131. 2 EGF-like domains span residues 97-132 (PEHA…RFCQ) and 136-176 (SYIN…LQCQ). Residue Asp113 is modified to (3R)-3-hydroxyaspartate. An N-linked (GlcNAc...) asparagine glycan is attached at Asn139. 5 cysteine pairs are disulfide-bonded: Cys140/Cys151, Cys147/Cys160, Cys162/Cys175, Cys183/Cys318, and Cys237/Cys253. Asn202 carries N-linked (GlcNAc...) asparagine glycosylation. Positions 211 to 445 (LVNGKVTRRG…YLDWIHSHIR (235 aa)) constitute a Peptidase S1 domain. The active-site Charge relay system is the His252. Asn289 carries an N-linked (GlcNAc...) asparagine glycan. The Charge relay system role is filled by Asp298. An N-linked (GlcNAc...) asparagine glycan is attached at Asn350. 2 disulfide bridges follow: Cys368/Cys382 and Cys393/Cys421. The Charge relay system role is filled by Ser397.

It belongs to the peptidase S1 family. As to quaternary structure, synthesized as a single chain precursor, which is cleaved into a light chain and a heavy chain held together by a disulfide bond. The enzyme is then activated by thrombin, which cleaves a tetradecapeptide from the amino end of the heavy chain; this reaction, which occurs at the surface of endothelial cells, is strongly promoted by thrombomodulin. The vitamin K-dependent, enzymatic carboxylation of some Glu residues allows the modified protein to bind calcium. Post-translationally, the iron and 2-oxoglutarate dependent 3-hydroxylation of aspartate and asparagine is (R) stereospecific within EGF domains. Plasma; synthesized in the liver.

It localises to the secreted. It is found in the golgi apparatus. Its subcellular location is the endoplasmic reticulum. It carries out the reaction Degradation of blood coagulation factors Va and VIIIa.. Protein C is a vitamin K-dependent serine protease that regulates blood coagulation by inactivating factors Va and VIIIa in the presence of calcium ions and phospholipids. Exerts a protective effect on the endothelial cell barrier function. This Canis lupus familiaris (Dog) protein is Vitamin K-dependent protein C (PROC).